We begin with the raw amino-acid sequence, 150 residues long: 16.9 kDa class I heat shock protein 1 (150 aa).

Residues 1-42 form an important for thermostability under elevated temperature region; it reads MSLVRRSNVFDPFSLDLWDPFDSVFRSVVPATSDNDTAAFAN. The sHSP domain maps to 36–150; it reads DTAAFANARI…PEVKAIEISG (115 aa).

It belongs to the small heat shock protein (HSP20) family. As to quaternary structure, forms oligomeric structures.

It is found in the cytoplasm. The chain is 16.9 kDa class I heat shock protein 1 (HSP16.9A) from Oryza sativa subsp. japonica (Rice).